A 471-amino-acid polypeptide reads, in one-letter code: Trigger factor (471 aa).

In terms of domain architecture, PPIase FKBP-type spans 169–254 (EDRVTIDYLG…VKEVAKPNEL (86 aa)). Positions 435–471 (VSKEELTAEDEDAASEAKPAKKAAAKKKAEEGKSEEA) are disordered. Residues 461 to 471 (KKAEEGKSEEA) show a composition bias toward basic and acidic residues.

It belongs to the FKBP-type PPIase family. Tig subfamily.

The protein localises to the cytoplasm. It carries out the reaction [protein]-peptidylproline (omega=180) = [protein]-peptidylproline (omega=0). In terms of biological role, involved in protein export. Acts as a chaperone by maintaining the newly synthesized protein in an open conformation. Functions as a peptidyl-prolyl cis-trans isomerase. The polypeptide is Trigger factor (Brucella abortus (strain S19)).